Here is a 358-residue protein sequence, read N- to C-terminus: C-X-C chemokine receptor type 2 (358 aa).

Topologically, residues 1 to 46 (MQEFTWENYSYEDFFGDFSNYSYSTDLPPTLLDSAPCRSESLETNS) are extracellular. N8 and N20 each carry an N-linked (GlcNAc...) asparagine glycan. Residues 47–73 (YVVLITYILVFLLSLLGNSLVMLVILY) traverse the membrane as a helical segment. At 74–82 (SRSTCSVTD) the chain is on the cytoplasmic side. A helical membrane pass occupies residues 83-103 (VYLLNLAIADLLFATTLPIWA). The Extracellular segment spans residues 104–118 (ASKVHGWTFGTPLCK). A disulfide bridge connects residues C117 and C194. Residues 119 to 140 (VVSLVKEVNFYSGILLLACISV) traverse the membrane as a helical segment. Residues 141-161 (DRYLAIVHATRTMIQKRHLVK) lie on the Cytoplasmic side of the membrane. The chain crosses the membrane as a helical span at residues 162–181 (FICLSMWGVSLILSLPILLF). The Extracellular segment spans residues 182–206 (RNAIFPPNSSPVCYEDMGNSTAKWR). The chain crosses the membrane as a helical span at residues 207–229 (MVLRILPQTFGFILPLLVMLFCY). At 230–249 (VFTLRTLFQAHMGQKHRAMR) the chain is on the cytoplasmic side. A helical transmembrane segment spans residues 250 to 271 (VIFAVVLIFLLCWLPYNLVLLT). Topologically, residues 272–292 (DTLMRTHVIQETCERRNDIDR) are extracellular. Residues 293-313 (ALDATEILGFLHSCLNPIIYA) form a helical membrane-spanning segment. Over 314–358 (FIGQKFRYGLLKILAAHGLISKEFLAKESRPSFVASSSGNTSTTL) the chain is Cytoplasmic.

This sequence belongs to the G-protein coupled receptor 1 family. As to quaternary structure, interacts with IL8. Interacts with GNAI2. Post-translationally, phosphorylated upon ligand binding; which is required for desensitization. Expressed preferentially in neutrophils.

Its subcellular location is the cell membrane. In terms of biological role, receptor for interleukin-8 which is a powerful neutrophil chemotactic factor. Binding of IL-8 to the receptor causes activation of neutrophils. This response is mediated via a G-protein that activates a phosphatidylinositol-calcium second messenger system. Binds to IL-8 with high affinity. Also binds with high affinity to CXCL3, GRO/MGSA and NAP-2. In Oryctolagus cuniculus (Rabbit), this protein is C-X-C chemokine receptor type 2 (CXCR2).